We begin with the raw amino-acid sequence, 204 residues long: Colicin-A (204 aa).

2 helical membrane-spanning segments follow: residues 139-161 (SWVLSGIASSVALGIFSATLGAY) and 165-187 (LGVPAIAVGIAGILLAAVVGALI).

This sequence belongs to the channel forming colicin family.

It is found in the cell membrane. Its function is as follows. This colicin is a channel-forming colicin. This class of transmembrane toxins depolarize the cytoplasmic membrane, leading to dissipation of cellular energy. In terms of biological role, colicins are polypeptide toxins produced by and active against E.coli and closely related bacteria. The sequence is that of Colicin-A (caa) from Escherichia coli.